Consider the following 263-residue polypeptide: uncharacterized protein (263 aa).

This is an uncharacterized protein from Archaeoglobus fulgidus (strain ATCC 49558 / DSM 4304 / JCM 9628 / NBRC 100126 / VC-16).